A 429-amino-acid polypeptide reads, in one-letter code: Glutamate-1-semialdehyde 2,1-aminomutase (429 aa).

At K265 the chain carries N6-(pyridoxal phosphate)lysine.

This sequence belongs to the class-III pyridoxal-phosphate-dependent aminotransferase family. HemL subfamily. As to quaternary structure, homodimer. Requires pyridoxal 5'-phosphate as cofactor.

Its subcellular location is the cytoplasm. It catalyses the reaction (S)-4-amino-5-oxopentanoate = 5-aminolevulinate. The protein operates within porphyrin-containing compound metabolism; protoporphyrin-IX biosynthesis; 5-aminolevulinate from L-glutamyl-tRNA(Glu): step 2/2. This Legionella pneumophila (strain Lens) protein is Glutamate-1-semialdehyde 2,1-aminomutase.